A 132-amino-acid chain; its full sequence is Small ribosomal subunit protein uS9 (132 aa).

The protein belongs to the universal ribosomal protein uS9 family.

The protein is Small ribosomal subunit protein uS9 of Mesomycoplasma hyopneumoniae (strain 232) (Mycoplasma hyopneumoniae).